Reading from the N-terminus, the 863-residue chain is Linoleate 9S-lipoxygenase 1 (863 aa).

Residues Arg32–Ala158 form the PLAT domain. The region spanning Ser161 to Ile863 is the Lipoxygenase domain. The tract at residues Asn204 to Glu244 is disordered. Fe cation contacts are provided by His518, His523, His709, Asn713, and Ile863.

Belongs to the lipoxygenase family. Monomer. The cofactor is Fe cation.

It is found in the cytoplasm. It catalyses the reaction (9Z,12Z)-octadecadienoate + O2 = (9S)-hydroperoxy-(10E,12Z)-octadecadienoate. It functions in the pathway lipid metabolism; oxylipin biosynthesis. Functionally, plant lipoxygenase may be involved in a number of diverse aspects of plant physiology including growth and development, pest resistance, and senescence or responses to wounding. This lipoxygenase introduces molecular oxygen exclusively into the C-9 position of linoleic and linolenic. In Oryza sativa subsp. japonica (Rice), this protein is Linoleate 9S-lipoxygenase 1.